Reading from the N-terminus, the 669-residue chain is Major S-layer protein (669 aa).

The signal sequence occupies residues 1-24 (MKRFAAVSLAALMLLTVFASAASA). N-linked (GlcNAc...) asparagine glycosylation is found at asparagine 36, asparagine 70, asparagine 116, asparagine 600, and asparagine 607. Positions 588–648 (DGEVVDDDED…PTEADGTTPG (61 aa)) are disordered. The span at 590-627 (EVVDDDEDDDNVTEPVDNDTEVEEPTEEPTEGPTEEPT) shows a compositional bias: acidic residues. A helical transmembrane segment spans residues 645–665 (TTPGFGVVLGLVGLLAVVYLV).

This sequence belongs to the Methanosarcinales S-layer protein family. In terms of processing, glycosylated.

The protein localises to the secreted. Its subcellular location is the cell wall. The protein resides in the S-layer. It localises to the cell membrane. S-layer protein. The S-layer is a paracrystalline mono-layered assembly of proteins which coat the surface of the cell. The sequence is that of Major S-layer protein from Methanosarcina mazei (strain ATCC BAA-159 / DSM 3647 / Goe1 / Go1 / JCM 11833 / OCM 88) (Methanosarcina frisia).